The following is a 185-amino-acid chain: Ribosome-recycling factor (185 aa).

Belongs to the RRF family.

The protein resides in the cytoplasm. Its function is as follows. Responsible for the release of ribosomes from messenger RNA at the termination of protein biosynthesis. May increase the efficiency of translation by recycling ribosomes from one round of translation to another. This Bacillus anthracis (strain A0248) protein is Ribosome-recycling factor.